Consider the following 161-residue polypeptide: Putative pre-16S rRNA nuclease (161 aa).

The segment at 142-161 (AGSPPGALVPRNRVDPDRHA) is disordered.

This sequence belongs to the YqgF nuclease family.

It localises to the cytoplasm. Functionally, could be a nuclease involved in processing of the 5'-end of pre-16S rRNA. This Clavibacter sepedonicus (Clavibacter michiganensis subsp. sepedonicus) protein is Putative pre-16S rRNA nuclease.